A 399-amino-acid polypeptide reads, in one-letter code: Acetate kinase (399 aa).

A Mg(2+)-binding site is contributed by asparagine 7. Lysine 14 provides a ligand contact to ATP. Arginine 90 is a substrate binding site. Aspartate 147 acts as the Proton donor/acceptor in catalysis. ATP is bound by residues 207 to 211, 282 to 284, and 330 to 334; these read HLGNG, DFR, and GIGEN. Position 385 (glutamate 385) interacts with Mg(2+).

The protein belongs to the acetokinase family. In terms of assembly, homodimer. Mg(2+) is required as a cofactor. Mn(2+) serves as cofactor.

The protein resides in the cytoplasm. It carries out the reaction acetate + ATP = acetyl phosphate + ADP. Its pathway is metabolic intermediate biosynthesis; acetyl-CoA biosynthesis; acetyl-CoA from acetate: step 1/2. In terms of biological role, catalyzes the formation of acetyl phosphate from acetate and ATP. Can also catalyze the reverse reaction. The sequence is that of Acetate kinase from Caldicellulosiruptor saccharolyticus (strain ATCC 43494 / DSM 8903 / Tp8T 6331).